A 57-amino-acid chain; its full sequence is Sperm protamine P1-type (57 aa).

The segment at 1–57 is disordered; the sequence is MARYRHNRSRSRSRHRRRRRGHRGGRYRRRRRRGRYGHRRHHRGHSRRRRKRRRSRH.

Belongs to the protamine P1 family. Testis.

It is found in the nucleus. It localises to the chromosome. In terms of biological role, protamines substitute for histones in the chromatin of sperm during the haploid phase of spermatogenesis. They compact sperm DNA into a highly condensed, stable and inactive complex. In Alligator mississippiensis (American alligator), this protein is Sperm protamine P1-type.